The primary structure comprises 184 residues: Protein GrpE (184 aa).

Positions methionine 1–alanine 26 are enriched in polar residues. Residues methionine 1–aspartate 34 form a disordered region.

This sequence belongs to the GrpE family. Homodimer.

It localises to the cytoplasm. Functionally, participates actively in the response to hyperosmotic and heat shock by preventing the aggregation of stress-denatured proteins, in association with DnaK and GrpE. It is the nucleotide exchange factor for DnaK and may function as a thermosensor. Unfolded proteins bind initially to DnaJ; upon interaction with the DnaJ-bound protein, DnaK hydrolyzes its bound ATP, resulting in the formation of a stable complex. GrpE releases ADP from DnaK; ATP binding to DnaK triggers the release of the substrate protein, thus completing the reaction cycle. Several rounds of ATP-dependent interactions between DnaJ, DnaK and GrpE are required for fully efficient folding. The sequence is that of Protein GrpE from Acinetobacter baumannii (strain AB307-0294).